A 359-amino-acid polypeptide reads, in one-letter code: Aflatoxin B1 aldehyde reductase member 2 (359 aa).

A mitochondrion-targeting transit peptide spans 1–38; that stretch reads MLSAASRVVSRAAVHCALRSPPPEARALAMSRPPPPRV. S40 is subject to Phosphoserine. Residue D72 participates in NADP(+) binding. Y77 acts as the Proton donor in catalysis. The residue at position 128 (K128) is an N6-acetyllysine. Residue H141 participates in substrate binding. Residues 171–172, Q197, 226–236, and R250 each bind NADP(+); these read SN and NPLAGGLLTGK. K236 carries the N6-succinyllysine modification. The residue at position 255 (S255) is a Phosphoserine. Substrate is bound by residues Y260 and R263. NADP(+) is bound at residue 318–326; the sequence is SSLEQLEQN. R359 is a binding site for substrate.

The protein belongs to the aldo/keto reductase family. Aldo/keto reductase 2 subfamily. Homodimer. As to expression, detected in brain, liver, small intestine and testis, and at lower levels in heart, prostate, skeletal muscle and spleen. Detected in kidney proximal and distal tubules, endothelial cells lining the Bowman's capsules and some cysts. Detected at low levels in lung and pancreas (at protein level). Widely expressed.

It localises to the mitochondrion. Its subcellular location is the golgi apparatus. It is found in the cytoplasm. The catalysed reaction is 4-hydroxybutanoate + NADP(+) = succinate semialdehyde + NADPH + H(+). Catalyzes the NADPH-dependent reduction of succinic semialdehyde to gamma-hydroxybutyrate. May have an important role in producing the neuromodulator gamma-hydroxybutyrate (GHB). Has broad substrate specificity. Has NADPH-dependent aldehyde reductase activity towards 2-carboxybenzaldehyde, 2-nitrobenzaldehyde and pyridine-2-aldehyde (in vitro). Can reduce 1,2-naphthoquinone and 9,10-phenanthrenequinone (in vitro). Can reduce the dialdehyde protein-binding form of aflatoxin B1 (AFB1) to the non-binding AFB1 dialcohol. May be involved in protection of liver against the toxic and carcinogenic effects of AFB1, a potent hepatocarcinogen. The protein is Aflatoxin B1 aldehyde reductase member 2 (AKR7A2) of Homo sapiens (Human).